Consider the following 83-residue polypeptide: MVKLRLKRYGRKQQPTYRIIAIDAKNRREGKALKELGFYNPIKNSIQLDVQNIILFLKNGAKPTDTVFDILNKHQVFEQMKKE.

This sequence belongs to the bacterial ribosomal protein bS16 family.

The protein localises to the plastid. It localises to the chloroplast. The sequence is that of Small ribosomal subunit protein bS16c from Chaetosphaeridium globosum (Charophycean green alga).